The primary structure comprises 926 residues: Isoleucine--tRNA ligase (926 aa).

The short motif at 57–67 (PYANGNIHMGH) is the 'HIGH' region element. Glutamate 555 serves as a coordination point for L-isoleucyl-5'-AMP. Positions 596–600 (KMSKS) match the 'KMSKS' region motif. Residue lysine 599 participates in ATP binding. Zn(2+) contacts are provided by cysteine 897, cysteine 900, cysteine 914, and cysteine 917.

Belongs to the class-I aminoacyl-tRNA synthetase family. IleS type 1 subfamily. As to quaternary structure, monomer. Zn(2+) serves as cofactor.

The protein resides in the cytoplasm. The enzyme catalyses tRNA(Ile) + L-isoleucine + ATP = L-isoleucyl-tRNA(Ile) + AMP + diphosphate. In terms of biological role, catalyzes the attachment of isoleucine to tRNA(Ile). As IleRS can inadvertently accommodate and process structurally similar amino acids such as valine, to avoid such errors it has two additional distinct tRNA(Ile)-dependent editing activities. One activity is designated as 'pretransfer' editing and involves the hydrolysis of activated Val-AMP. The other activity is designated 'posttransfer' editing and involves deacylation of mischarged Val-tRNA(Ile). This chain is Isoleucine--tRNA ligase, found in Natranaerobius thermophilus (strain ATCC BAA-1301 / DSM 18059 / JW/NM-WN-LF).